Reading from the N-terminus, the 552-residue chain is CTP synthase (552 aa).

Residues 1–270 (MTKYVFVTGG…DRIICEELKL (270 aa)) are amidoligase domain. Residue Ser13 participates in CTP binding. UTP is bound at residue Ser13. ATP-binding positions include 14–19 (SLGKGI) and Asp71. Mg(2+) contacts are provided by Asp71 and Glu144. CTP-binding positions include 151 to 153 (DIE), 191 to 196 (KTKPTQ), and Lys227. UTP contacts are provided by residues 191 to 196 (KTKPTQ) and Lys227. The Glutamine amidotransferase type-1 domain occupies 295–547 (TIGMVGKYVD…VEAALANKQA (253 aa)). Gly356 contributes to the L-glutamine binding site. Catalysis depends on Cys383, which acts as the Nucleophile; for glutamine hydrolysis. L-glutamine is bound by residues 384 to 387 (LGMQ), Glu407, and Arg473. Catalysis depends on residues His520 and Glu522.

It belongs to the CTP synthase family. As to quaternary structure, homotetramer.

It catalyses the reaction UTP + L-glutamine + ATP + H2O = CTP + L-glutamate + ADP + phosphate + 2 H(+). The enzyme catalyses L-glutamine + H2O = L-glutamate + NH4(+). The catalysed reaction is UTP + NH4(+) + ATP = CTP + ADP + phosphate + 2 H(+). It functions in the pathway pyrimidine metabolism; CTP biosynthesis via de novo pathway; CTP from UDP: step 2/2. With respect to regulation, allosterically activated by GTP, when glutamine is the substrate; GTP has no effect on the reaction when ammonia is the substrate. The allosteric effector GTP functions by stabilizing the protein conformation that binds the tetrahedral intermediate(s) formed during glutamine hydrolysis. Inhibited by the product CTP, via allosteric rather than competitive inhibition. Functionally, catalyzes the ATP-dependent amination of UTP to CTP with either L-glutamine or ammonia as the source of nitrogen. Regulates intracellular CTP levels through interactions with the four ribonucleotide triphosphates. This chain is CTP synthase, found in Burkholderia cenocepacia (strain HI2424).